The sequence spans 480 residues: Glucosylglycerol phosphorylase (480 aa).

Asp190 (nucleophile) is an active-site residue. Residue Tyr194 coordinates substrate. Glu231 serves as the catalytic Proton donor. Gln336 contacts substrate.

Belongs to the glycosyl hydrolase 13 family. Sucrose phosphorylase subfamily.

The catalysed reaction is 2-O-(alpha-D-glucopyranosyl)glycerol + phosphate = alpha-D-glucose 1-phosphate + glycerol. In terms of biological role, catalyzes the reversible phosphorolysis of 2-O-alpha-D-glucosylglycerol with retention of the anomeric configuration, forming alpha-D-glucose 1-phosphate and glycerol. Has most likely a catabolic role, either regulating the intracellular levels of glucosylglycerol, which acts as a compatible solute, or degrading it when the environmental conditions change. Cannot catalyze the phosphorolysis of sucrose or glucosylglycerate. This is Glucosylglycerol phosphorylase from Marinobacter adhaerens (strain DSM 23420 / HP15).